The primary structure comprises 558 residues: Galactoside 2-alpha-L-fucosyltransferase (558 aa).

Residues 1–43 lie on the Cytoplasmic side of the membrane; the sequence is MDQNSYRRRSSPIRTTTGGSKSVNFSELLQMKYLSSGTMKLTR. The chain crosses the membrane as a helical; Signal-anchor for type II membrane protein span at residues 44–64; it reads TFTTCLIVFSVLVAFSMIFHQ. The Lumenal portion of the chain corresponds to 65–558; it reads HPSDSNRIMG…EDISWGLKLV (494 aa). Residues Asn88 and Asn504 are each glycosylated (N-linked (GlcNAc...) asparagine).

This sequence belongs to the glycosyltransferase 37 family. In terms of assembly, homodimer. Interacts with MUR3, XLT2, XXT2 and XXT5. Expressed in roots, stems, leaves, flowers, siliques and seedlings.

The protein localises to the golgi apparatus. The protein resides in the golgi stack membrane. It localises to the golgi apparatus membrane. Its function is as follows. Involved in cell wall biosynthesis. Is both necessary and sufficient for the addition of the terminal fucosyl residue on xyloglucan side chains, but is not involved in the fucosylation of other cell wall components. Associates with other xyloglucan-synthesizing enzymes to form multiprotein complexes for xyloglucan synthesis in the Golgi. The protein is Galactoside 2-alpha-L-fucosyltransferase (FUT1) of Arabidopsis thaliana (Mouse-ear cress).